A 32-amino-acid chain; its full sequence is Giant hemoglobin AIV chain (32 aa).

This sequence belongs to the globin family. As to quaternary structure, giant hemoglobin is composed of four heme-containing chains (AI to AIV), and two linker chains (AV and AVI).

The sequence is that of Giant hemoglobin AIV chain from Lamellibrachia sp. (Deep-sea giant tube worm).